The following is a 132-amino-acid chain: Small ribosomal subunit protein uS8 (132 aa).

It belongs to the universal ribosomal protein uS8 family. As to quaternary structure, part of the 30S ribosomal subunit. Contacts proteins S5 and S12.

Its function is as follows. One of the primary rRNA binding proteins, it binds directly to 16S rRNA central domain where it helps coordinate assembly of the platform of the 30S subunit. The polypeptide is Small ribosomal subunit protein uS8 (Limosilactobacillus fermentum (strain NBRC 3956 / LMG 18251) (Lactobacillus fermentum)).